Consider the following 451-residue polypeptide: Phosphoglucosamine mutase (451 aa).

S107 acts as the Phosphoserine intermediate in catalysis. Positions 107, 246, 248, and 250 each coordinate Mg(2+). S107 is subject to Phosphoserine.

Belongs to the phosphohexose mutase family. Requires Mg(2+) as cofactor. In terms of processing, activated by phosphorylation.

The catalysed reaction is alpha-D-glucosamine 1-phosphate = D-glucosamine 6-phosphate. In terms of biological role, catalyzes the conversion of glucosamine-6-phosphate to glucosamine-1-phosphate. The polypeptide is Phosphoglucosamine mutase (Burkholderia multivorans (strain ATCC 17616 / 249)).